Reading from the N-terminus, the 271-residue chain is 2,3,4,5-tetrahydropyridine-2,6-dicarboxylate N-succinyltransferase (271 aa).

This sequence belongs to the transferase hexapeptide repeat family.

Its subcellular location is the cytoplasm. It catalyses the reaction (S)-2,3,4,5-tetrahydrodipicolinate + succinyl-CoA + H2O = (S)-2-succinylamino-6-oxoheptanedioate + CoA. Its pathway is amino-acid biosynthesis; L-lysine biosynthesis via DAP pathway; LL-2,6-diaminopimelate from (S)-tetrahydrodipicolinate (succinylase route): step 1/3. The sequence is that of 2,3,4,5-tetrahydropyridine-2,6-dicarboxylate N-succinyltransferase from Coxiella burnetii (strain CbuG_Q212) (Coxiella burnetii (strain Q212)).